The chain runs to 68 residues: Conotoxin TsMMSK-021 (68 aa).

The signal sequence occupies residues 1 to 20 (MMSKLGVLLTICLLLFPLTA). Positions 21 to 50 (VPLDGDQHADRPADRMQDISSEQHPLFDPV) are excised as a propeptide. 3 disulfide bridges follow: Cys53/Cys66, Cys54/Cys62, and Cys58/Cys65. Pro64 carries the 4-hydroxyproline modification.

This sequence belongs to the conotoxin M superfamily. Expressed by the venom duct.

Its subcellular location is the secreted. The polypeptide is Conotoxin TsMMSK-021 (Conus tessulatus (Tessellate cone)).